We begin with the raw amino-acid sequence, 146 residues long: 3-dehydroquinate dehydratase (146 aa).

Tyr-23 (proton acceptor) is an active-site residue. Residues Asn-74, His-80, and Asp-87 each coordinate substrate. His-100 serves as the catalytic Proton donor. Residues 101-102 (IS) and Arg-111 contribute to the substrate site.

Belongs to the type-II 3-dehydroquinase family. As to quaternary structure, homododecamer.

It carries out the reaction 3-dehydroquinate = 3-dehydroshikimate + H2O. Its pathway is metabolic intermediate biosynthesis; chorismate biosynthesis; chorismate from D-erythrose 4-phosphate and phosphoenolpyruvate: step 3/7. Functionally, catalyzes a trans-dehydration via an enolate intermediate. This Bacillus cereus (strain ATCC 10987 / NRS 248) protein is 3-dehydroquinate dehydratase.